The following is a 236-amino-acid chain: LexA repressor (236 aa).

The H-T-H motif DNA-binding region spans 26-46; the sequence is FDEMKDALDLRSKSGIHRLIT. The interval 85 to 109 is disordered; it reads PSVIEGNLGKVRPPSPTPAEDDHDR. Residues serine 157 and lysine 195 each act as for autocatalytic cleavage activity in the active site.

The protein belongs to the peptidase S24 family. Homodimer.

The enzyme catalyses Hydrolysis of Ala-|-Gly bond in repressor LexA.. In terms of biological role, represses a number of genes involved in the response to DNA damage (SOS response), including recA and lexA. In the presence of single-stranded DNA, RecA interacts with LexA causing an autocatalytic cleavage which disrupts the DNA-binding part of LexA, leading to derepression of the SOS regulon and eventually DNA repair. The polypeptide is LexA repressor (Rhodopseudomonas palustris (strain ATCC BAA-98 / CGA009)).